A 533-amino-acid chain; its full sequence is Beta-glucosidase 24 (533 aa).

The first 26 residues, 1 to 26 (MVLQKLPLMSIGLLWLLIIVGPLVNA), serve as a signal peptide directing secretion. Gln-58 is an a beta-D-glucoside binding site. Asn-64 and Asn-88 each carry an N-linked (GlcNAc...) asparagine glycan. Residues His-161 and 206–207 (NE) contribute to the a beta-D-glucoside site. Glu-207 acts as the Proton donor in catalysis. An intrachain disulfide couples Cys-226 to Cys-239. Tyr-355 contributes to the a beta-D-glucoside binding site. Residue Asn-388 is glycosylated (N-linked (GlcNAc...) asparagine). Glu-427 serves as a coordination point for a beta-D-glucoside. Glu-427 serves as the catalytic Nucleophile. N-linked (GlcNAc...) asparagine glycosylation is found at Asn-437, Asn-442, and Asn-470. A beta-D-glucoside is bound by residues Trp-477, 484–485 (EW), and Phe-493. Residue Asn-503 is glycosylated (N-linked (GlcNAc...) asparagine). The Prevents secretion from ER signature appears at 530 to 533 (KDEL).

It belongs to the glycosyl hydrolase 1 family.

It is found in the endoplasmic reticulum lumen. It carries out the reaction Hydrolysis of terminal, non-reducing beta-D-glucosyl residues with release of beta-D-glucose.. The polypeptide is Beta-glucosidase 24 (Arabidopsis thaliana (Mouse-ear cress)).